The following is a 366-amino-acid chain: Bacteriochlorophyll a protein (366 aa).

Residues H110, H145, H290, H297, and H298 each contribute to the bacteriochlorophyll a site.

As to quaternary structure, homotrimer. Each subunit contains 7 molecules of bacteriochlorophyll a.

Functionally, intermediary in the transfer of excitation energy from the chlorophyll to the reaction centers. The protein is Bacteriochlorophyll a protein of Prosthecochloris aestuarii.